The sequence spans 196 residues: Protein hunchback (196 aa).

3 disordered regions span residues 16 to 56, 63 to 82, and 156 to 196; these read SHHH…SHTN, LKQQQQQQQQHQHQQQQQPM, and LTPP…KYMA. Residues 17–29 show a composition bias toward basic residues; that stretch reads HHHHHHHAHHSHH. 2 stretches are compositionally biased toward low complexity: residues 33–43 and 65–80; these read SNSNASNSPHQ and QQQQQQQQHQHQQQQQ. Positions 177–196 are enriched in basic and acidic residues; sequence EPEKEHDLMSNSSEDMKYMA.

This sequence belongs to the hunchback C2H2-type zinc-finger protein family.

The protein resides in the nucleus. Its function is as follows. Gap class segmentation protein that controls development of head structures. The sequence is that of Protein hunchback (hb) from Drosophila adunca (Fruit fly).